Consider the following 212-residue polypeptide: Putative tyrosine-protein phosphatase OCA1 (212 aa).

The disordered stretch occupies residues 1-27 (MSNKDTSILKGNVDHEEADSNPKLRKI). Residues 12 to 22 (NVDHEEADSNP) show a composition bias toward basic and acidic residues. The Tyrosine-protein phosphatase domain occupies 40 to 208 (NFCPVERQLY…SVEIDPSKVP (169 aa)). Cysteine 146 acts as the Phosphocysteine intermediate in catalysis.

It belongs to the protein-tyrosine phosphatase family.

The protein resides in the cytoplasm. It catalyses the reaction O-phospho-L-tyrosyl-[protein] + H2O = L-tyrosyl-[protein] + phosphate. Functionally, putative tyrosine-protein phosphatase required for protection against superoxide stress. In Scheffersomyces stipitis (strain ATCC 58785 / CBS 6054 / NBRC 10063 / NRRL Y-11545) (Yeast), this protein is Putative tyrosine-protein phosphatase OCA1 (OCA1).